The sequence spans 442 residues: UDP-N-acetylglucosamine--peptide N-acetylglucosaminyltransferase stabilizing protein GtfB (442 aa).

This sequence belongs to the GtfB family. Interacts with glycosyltransferase GtfA (Gtf1). Interacts with glycosyltransferase GtfA; probably forms a heterotetramer with 2 subunits each of GtfA and GtfB. Part of the accessory SecA2/SecY2 protein translocation apparatus.

It localises to the cell membrane. It participates in protein modification; protein glycosylation. Required for the polymorphic O-glycosylation of the serine-rich repeat protein Srr2. A stabilizing protein that is part of the accessory SecA2/SecY2 system specifically required to export serine-rich repeat proteins, probably Srr2 in this organism. The GtfA-GtfB (Gtf1-Gtf2 in this bacteria) complex adds GlcNAc from UDP-GlcNAc to Srr2 substrate, attaching the first sugar residue. Stabilizes the glycosylation activity of GtfA in vivo. Upon expression in a gtfB deletion mutant of S.parasanguis, GtfB confers incorrect glycosylation and partial complementation of a biofilm formation defect, while GtfA/GtfB restores correct expression of serine-rich repeat protein Fap1 and completely restores a biofilm formation defect in a S.parasanguis double gtfA-gtfB deletion. This chain is UDP-N-acetylglucosamine--peptide N-acetylglucosaminyltransferase stabilizing protein GtfB, found in Streptococcus agalactiae.